The following is a 229-amino-acid chain: Cytochrome c oxidase subunit 2 (229 aa).

Residues 1–26 are Mitochondrial intermembrane-facing; it reads MATWMNINLQDANSSTMEQLTMFHDH. A helical transmembrane segment spans residues 27–48; the sequence is TLMILTMITSIVTFIMVSMTTN. The Mitochondrial matrix segment spans residues 49–62; it reads TLINRYLLEGQTIE. A helical transmembrane segment spans residues 63-82; sequence FIWTTIPAITLIFIALPSLH. Residues 83 to 229 are Mitochondrial intermembrane-facing; that stretch reads LLYLIDEINN…LKWINKSLSS (147 aa). Residues histidine 161, cysteine 196, glutamate 198, cysteine 200, histidine 204, and methionine 207 each contribute to the Cu cation site. Residue glutamate 198 coordinates Mg(2+).

It belongs to the cytochrome c oxidase subunit 2 family. Component of the cytochrome c oxidase (complex IV, CIV), a multisubunit enzyme composed of a catalytic core of 3 subunits and several supernumerary subunits. The complex exists as a monomer or a dimer and forms supercomplexes (SCs) in the inner mitochondrial membrane with ubiquinol-cytochrome c oxidoreductase (cytochrome b-c1 complex, complex III, CIII). The cofactor is Cu cation.

Its subcellular location is the mitochondrion inner membrane. It catalyses the reaction 4 Fe(II)-[cytochrome c] + O2 + 8 H(+)(in) = 4 Fe(III)-[cytochrome c] + 2 H2O + 4 H(+)(out). In terms of biological role, component of the cytochrome c oxidase, the last enzyme in the mitochondrial electron transport chain which drives oxidative phosphorylation. The respiratory chain contains 3 multisubunit complexes succinate dehydrogenase (complex II, CII), ubiquinol-cytochrome c oxidoreductase (cytochrome b-c1 complex, complex III, CIII) and cytochrome c oxidase (complex IV, CIV), that cooperate to transfer electrons derived from NADH and succinate to molecular oxygen, creating an electrochemical gradient over the inner membrane that drives transmembrane transport and the ATP synthase. Cytochrome c oxidase is the component of the respiratory chain that catalyzes the reduction of oxygen to water. Electrons originating from reduced cytochrome c in the intermembrane space (IMS) are transferred via the dinuclear copper A center (CU(A)) of subunit 2 and heme A of subunit 1 to the active site in subunit 1, a binuclear center (BNC) formed by heme A3 and copper B (CU(B)). The BNC reduces molecular oxygen to 2 water molecules using 4 electrons from cytochrome c in the IMS and 4 protons from the mitochondrial matrix. In Oncopeltus fasciatus (Large milkweed bug), this protein is Cytochrome c oxidase subunit 2 (COII).